A 372-amino-acid polypeptide reads, in one-letter code: tRNA-specific 2-thiouridylase MnmA (372 aa).

Residues 13 to 20 (GMSGGVDS) and methionine 39 contribute to the ATP site. The interval 99-101 (NPD) is interaction with target base in tRNA. Cysteine 104 functions as the Nucleophile in the catalytic mechanism. Cysteine 104 and cysteine 200 are joined by a disulfide. Glycine 128 lines the ATP pocket. Positions 150-152 (KDQ) are interaction with tRNA. The Cysteine persulfide intermediate role is filled by cysteine 200. Positions 310–311 (RY) are interaction with tRNA.

This sequence belongs to the MnmA/TRMU family.

The protein localises to the cytoplasm. The catalysed reaction is S-sulfanyl-L-cysteinyl-[protein] + uridine(34) in tRNA + AH2 + ATP = 2-thiouridine(34) in tRNA + L-cysteinyl-[protein] + A + AMP + diphosphate + H(+). Catalyzes the 2-thiolation of uridine at the wobble position (U34) of tRNA, leading to the formation of s(2)U34. The chain is tRNA-specific 2-thiouridylase MnmA from Bacillus pumilus (strain SAFR-032).